A 687-amino-acid chain; its full sequence is Putative mitochondrial carnitine O-acetyltransferase (687 aa).

The active-site Proton acceptor is histidine 346. A CoA-binding site is contributed by 446–459 (GASHIKTVFKCSPD). (R)-carnitine-binding residues include tyrosine 481 and threonine 494. Residue serine 517 is modified to Phosphoserine.

The protein belongs to the carnitine/choline acetyltransferase family.

The protein resides in the mitochondrion inner membrane. The catalysed reaction is (R)-carnitine + acetyl-CoA = O-acetyl-(R)-carnitine + CoA. Functionally, involved in the transfer of acetyl-CoA into mitochondria. May also be involved in the metabolism of acetate and of ethanol. The sequence is that of Putative mitochondrial carnitine O-acetyltransferase (YAT1) from Saccharomyces cerevisiae (strain ATCC 204508 / S288c) (Baker's yeast).